A 482-amino-acid polypeptide reads, in one-letter code: GDP-D-glucose phosphorylase 1 (482 aa).

Residues 1 to 21 (MEPFPRILDDRLPRNMRRPRP) form a disordered region. His255 (tele-GMP-histidine intermediate) is an active-site residue. The tract at residues 461 to 482 (MPRSPSIRHRSSTRAQSDEGSK) is disordered.

Belongs to the GDPGP1 family. Expressed throughout the neuronal system, in the spermatheca and anterior hypodermal cells.

It is found in the cytoplasm. The catalysed reaction is GDP-alpha-D-glucose + phosphate = alpha-D-glucose 1-phosphate + GDP + H(+). Its function is as follows. Specific and highly efficient GDP-D-glucose phosphorylase regulating the levels of GDP-D-glucose in cells. This is GDP-D-glucose phosphorylase 1 from Caenorhabditis elegans.